We begin with the raw amino-acid sequence, 263 residues long: MGVIDLITRVDSICKKYEKYDINRQRDANVSGDDAFSRLYSAVEYALETVLQKTEDLSSETNKAKAVAMNAEIRRTKARLLEGIPKLQRLSLKKVKGLSKEELDARNDLVLSLRDKIEAIPESSAPVVGGWEASTSYSNIRFDTNVSDDRIGSEYFQPTGESDQFKQEYEMKRIKQARLDYIAEGLDTLKNMAQDINEELDRQEPLMDEIDTKIDKAATDLKSTNVRLKDTVTKLRSSRNFCIDIILLCILLGIAAFIYNSVK.

The Cytoplasmic portion of the chain corresponds to 1-240 (MGVIDLITRV…TVTKLRSSRN (240 aa)). The residue at position 12 (Ser12) is a Phosphoserine. The t-SNARE coiled-coil homology domain maps to 169-231 (YEMKRIKQAR…KSTNVRLKDT (63 aa)). Residues 241–261 (FCIDIILLCILLGIAAFIYNS) traverse the membrane as a helical; Anchor for type IV membrane protein segment. Topologically, residues 262–263 (VK) are vesicular.

The protein belongs to the syntaxin family. As to quaternary structure, part of the t-SNARE complex. Expressed in root, leaf, stem, flower and silique.

The protein resides in the membrane. Its function is as follows. Vesicle trafficking protein that functions in the secretory pathway. The protein is Syntaxin-73 (SYP73) of Arabidopsis thaliana (Mouse-ear cress).